The primary structure comprises 351 residues: UDP-3-O-acylglucosamine N-acyltransferase (351 aa).

The active-site Proton acceptor is the histidine 239.

It belongs to the transferase hexapeptide repeat family. LpxD subfamily. In terms of assembly, homotrimer.

It carries out the reaction a UDP-3-O-[(3R)-3-hydroxyacyl]-alpha-D-glucosamine + a (3R)-hydroxyacyl-[ACP] = a UDP-2-N,3-O-bis[(3R)-3-hydroxyacyl]-alpha-D-glucosamine + holo-[ACP] + H(+). Its pathway is bacterial outer membrane biogenesis; LPS lipid A biosynthesis. In terms of biological role, catalyzes the N-acylation of UDP-3-O-acylglucosamine using 3-hydroxyacyl-ACP as the acyl donor. Is involved in the biosynthesis of lipid A, a phosphorylated glycolipid that anchors the lipopolysaccharide to the outer membrane of the cell. In Vibrio cholerae serotype O1 (strain ATCC 39315 / El Tor Inaba N16961), this protein is UDP-3-O-acylglucosamine N-acyltransferase.